A 517-amino-acid chain; its full sequence is Maturase K (517 aa).

The protein belongs to the intron maturase 2 family. MatK subfamily.

It localises to the plastid. The protein localises to the chloroplast. Functionally, usually encoded in the trnK tRNA gene intron. Probably assists in splicing its own and other chloroplast group II introns. The sequence is that of Maturase K from Acer pseudoplatanus (Sycamore maple).